The primary structure comprises 142 residues: Large ribosomal subunit protein uL11 (142 aa).

The protein belongs to the universal ribosomal protein uL11 family. As to quaternary structure, part of the ribosomal stalk of the 50S ribosomal subunit. Interacts with L10 and the large rRNA to form the base of the stalk. L10 forms an elongated spine to which L12 dimers bind in a sequential fashion forming a multimeric L10(L12)X complex. In terms of processing, one or more lysine residues are methylated.

Functionally, forms part of the ribosomal stalk which helps the ribosome interact with GTP-bound translation factors. The sequence is that of Large ribosomal subunit protein uL11 from Shewanella halifaxensis (strain HAW-EB4).